The following is a 351-amino-acid chain: uncharacterized protein (351 aa).

Mn(2+)-binding residues include Asp-215, Asp-226, His-290, Glu-319, and Glu-333.

It belongs to the peptidase M24B family. Mn(2+) is required as a cofactor.

This is an uncharacterized protein from Staphylococcus epidermidis (strain ATCC 35984 / DSM 28319 / BCRC 17069 / CCUG 31568 / BM 3577 / RP62A).